Here is a 318-residue protein sequence, read N- to C-terminus: Putative olfactory receptor 2W6 (318 aa).

Topologically, residues 1-31 (MGFYHVGQAAFELLTSSFILVGFSDRPHLEL) are extracellular. A helical transmembrane segment spans residues 32-52 (IVFVVVLIFYLLTLLGNMTIV). The Cytoplasmic portion of the chain corresponds to 53–63 (LLSALDSRLHT). Residues 64 to 84 (PMYFFLANLSFLDMCFTTGSI) form a helical membrane-spanning segment. Over 85 to 103 (PQMLYNLWGPDKTISYVGC) the chain is Extracellular. C103 and C185 are oxidised to a cystine. A helical transmembrane segment spans residues 104–124 (AIQLYFVLALGGVECVLLAVM). Topologically, residues 125 to 145 (AYDRYAAVCKPLHYTIIMHPR) are cytoplasmic. The helical transmembrane segment at 146 to 166 (LCGQLASVAWLSGFGNSLIMA) threads the bilayer. Residues 167 to 202 (PQTLMLPRCGHRRVDHFLCEMPALIGMACVDTMMLE) are Extracellular-facing. The chain crosses the membrane as a helical span at residues 203–223 (ALAFALAIFIILAPLILILIS). The Cytoplasmic segment spans residues 224-245 (YGYVGGTVLRIKSAAGRKKAFN). A helical membrane pass occupies residues 246-266 (TCSSHLIVVSLFYGTIIYMYL). Topologically, residues 267–277 (QPANTYSQDQG) are extracellular. A helical membrane pass occupies residues 278–298 (KFLTLFYTIVTPSVNPLIYTL). Residues 299–318 (RNKDVKEAMKKVLGKGSAEI) are Cytoplasmic-facing.

The protein belongs to the G-protein coupled receptor 1 family.

It localises to the cell membrane. Its function is as follows. Odorant receptor. The sequence is that of Putative olfactory receptor 2W6 (OR2W6P) from Homo sapiens (Human).